A 700-amino-acid polypeptide reads, in one-letter code: Elongation factor G 1 (700 aa).

The tr-type G domain occupies 8–290 (QNYRNIGISA…AVIEFMPSPI (283 aa)). Residues 17–24 (AHIDAGKT), 88–92 (DTPGH), and 142–145 (NKMD) each bind GTP.

The protein belongs to the TRAFAC class translation factor GTPase superfamily. Classic translation factor GTPase family. EF-G/EF-2 subfamily.

It is found in the cytoplasm. Functionally, catalyzes the GTP-dependent ribosomal translocation step during translation elongation. During this step, the ribosome changes from the pre-translocational (PRE) to the post-translocational (POST) state as the newly formed A-site-bound peptidyl-tRNA and P-site-bound deacylated tRNA move to the P and E sites, respectively. Catalyzes the coordinated movement of the two tRNA molecules, the mRNA and conformational changes in the ribosome. The sequence is that of Elongation factor G 1 from Polaromonas sp. (strain JS666 / ATCC BAA-500).